Here is a 464-residue protein sequence, read N- to C-terminus: MVKLYNTLTKKKEPFTPIDKDHIKMYVCGPTVYDTAHIGNARSIVVYDVLFRLLKFCYGKVTYVRNITDIDDKIINAANEKNSNIESISKYYTKTFHEDMESINCAEPTYEPKATENIDNIIKLIESLLQAGHAYESNKHVYFSVESYPEYGVLSGKKIDELNYGSRVEVGENKKHPGDFVLWKPANETDYKLSSHWNSPWGEGRPGWHIECSAMSYAYLGKDFDIHGGGIDLQFPHHENEIAQSKSAFAESTFAKYWVHNGFLTVNEEKMSKSLFNIVKVRDLLDSGIKGEVIRYALLKTHYRKPLDWTENVISESQETLNKFYRLLRSTCIEESDTEVSKDFIEALKNDLNIPEAVAILHEMATEINKTSNEYEKLKLTKKFVKSARFIGILESSYQEWFASGVSHQEIERLIDLRKVAKQNKDYDTADKIREQLKQMGVTISDNEDGTTTWYGKLSPIVYR.

C28 lines the Zn(2+) pocket. The short motif at 30-40 (PTVYDTAHIGN) is the 'HIGH' region element. Positions 212, 237, and 241 each coordinate Zn(2+). Residues 270–274 (KMSKS) carry the 'KMSKS' region motif. Position 273 (K273) interacts with ATP.

It belongs to the class-I aminoacyl-tRNA synthetase family. In terms of assembly, monomer. Zn(2+) is required as a cofactor.

Its subcellular location is the cytoplasm. The enzyme catalyses tRNA(Cys) + L-cysteine + ATP = L-cysteinyl-tRNA(Cys) + AMP + diphosphate. The chain is Cysteine--tRNA ligase from Wolbachia pipientis subsp. Culex pipiens (strain wPip).